The following is a 449-amino-acid chain: Agmatine hydroxycinnamoyltransferase 1 (449 aa).

Catalysis depends on proton acceptor residues histidine 153 and aspartate 392.

It belongs to the plant acyltransferase family. Highly expressed in roots. Expressed at low levels in flowers.

Hydroxycinnamoyl transferase that catalyzes the transfer of an acyl from p-coumaryol-CoA to agmatine, to produce coumaroyl agmatine. Can use feruloyl-CoA, caffeoyl-CoA and sinapoyl-CoA as acyl donors. Seems to be able to transfer the acyl group from p-coumaroyl-CoA and feruloyl-CoA to the acyl acceptors putrescine and spermidine. This is Agmatine hydroxycinnamoyltransferase 1 from Oryza sativa subsp. japonica (Rice).